The primary structure comprises 188 residues: Large ribosomal subunit protein eL18 (188 aa).

K119 participates in a covalent cross-link: Glycyl lysine isopeptide (Lys-Gly) (interchain with G-Cter in SUMO2). The residue at position 130 (S130) is a Phosphoserine. A disordered region spans residues 150–188 (RHFGKAPGTPHSHTKPYVRSKGRKFERARGRRASRGYKN). T158 is subject to Phosphothreonine. 2 stretches are compositionally biased toward basic residues: residues 161 to 171 (SHTKPYVRSKG) and 178 to 188 (RGRRASRGYKN). K164 participates in a covalent cross-link: Glycyl lysine isopeptide (Lys-Gly) (interchain with G-Cter in SUMO2).

It belongs to the eukaryotic ribosomal protein eL18 family. As to quaternary structure, component of the large ribosomal subunit.

Its subcellular location is the cytoplasm. The protein resides in the cytosol. The protein localises to the rough endoplasmic reticulum. Component of the large ribosomal subunit. The ribosome is a large ribonucleoprotein complex responsible for the synthesis of proteins in the cell. The polypeptide is Large ribosomal subunit protein eL18 (Rpl18) (Mus musculus (Mouse)).